Here is a 354-residue protein sequence, read N- to C-terminus: DNA ligase C2 (354 aa).

K29 acts as the N6-AMP-lysine intermediate in catalysis.

It belongs to the ATP-dependent DNA ligase family.

It carries out the reaction ATP + (deoxyribonucleotide)n-3'-hydroxyl + 5'-phospho-(deoxyribonucleotide)m = (deoxyribonucleotide)n+m + AMP + diphosphate.. DNA ligase that seals nicks in double-stranded DNA during DNA replication, DNA recombination and DNA repair. Has weak intrinsic nick joining activities and accumulates DNA-adenylate. Acts as a backup for LigD in the Ku-LigD-dependent NHEJ pathway. The sequence is that of DNA ligase C2 (ligC2) from Mycolicibacterium smegmatis (strain ATCC 700084 / mc(2)155) (Mycobacterium smegmatis).